The sequence spans 442 residues: 4-alpha-glucanotransferase (442 aa).

Ca(2+) contacts are provided by aspartate 13, asparagine 15, aspartate 17, valine 19, and aspartate 21. The active-site Nucleophile is the aspartate 186. Residue glutamate 216 is the Proton donor of the active site.

This sequence belongs to the glycosyl hydrolase 13 family. Monomer. Ca(2+) serves as cofactor.

The protein localises to the cytoplasm. The enzyme catalyses Transfers a segment of a (1-&gt;4)-alpha-D-glucan to a new position in an acceptor, which may be glucose or a (1-&gt;4)-alpha-D-glucan.. Functionally, hydrolyzes the 1,4-alpha-glycoside bonds in oligomeric and polymeric 1,4-alpha-glucans and transfers oligosaccharides (maltotriose being the shortest one) to acceptor maltodextrins. This is 4-alpha-glucanotransferase (mgtA) from Thermotoga neapolitana.